The following is a 201-amino-acid chain: dTTP/UTP pyrophosphatase (201 aa).

D79 (proton acceptor) is an active-site residue.

The protein belongs to the Maf family. YhdE subfamily. A divalent metal cation is required as a cofactor.

The protein localises to the cytoplasm. It carries out the reaction dTTP + H2O = dTMP + diphosphate + H(+). The catalysed reaction is UTP + H2O = UMP + diphosphate + H(+). Functionally, nucleoside triphosphate pyrophosphatase that hydrolyzes dTTP and UTP. May have a dual role in cell division arrest and in preventing the incorporation of modified nucleotides into cellular nucleic acids. This Hahella chejuensis (strain KCTC 2396) protein is dTTP/UTP pyrophosphatase.